The primary structure comprises 1305 residues: DNA-directed DNA polymerase (1305 aa).

This sequence belongs to the DNA polymerase type-C family.

The catalysed reaction is DNA(n) + a 2'-deoxyribonucleoside 5'-triphosphate = DNA(n+1) + diphosphate. Functionally, replicates viral genomic DNA. This chain is DNA-directed DNA polymerase, found in Bacillus pumilus (Bacillus mesentericus).